Here is a 601-residue protein sequence, read N- to C-terminus: Elongation factor 4 (601 aa).

The tr-type G domain occupies 6-188 (SHIRNFSIIA…QIVHRVPAPE (183 aa)). GTP contacts are provided by residues 18-23 (DHGKST) and 135-138 (NKID).

It belongs to the TRAFAC class translation factor GTPase superfamily. Classic translation factor GTPase family. LepA subfamily.

It is found in the cell inner membrane. The catalysed reaction is GTP + H2O = GDP + phosphate + H(+). Functionally, required for accurate and efficient protein synthesis under certain stress conditions. May act as a fidelity factor of the translation reaction, by catalyzing a one-codon backward translocation of tRNAs on improperly translocated ribosomes. Back-translocation proceeds from a post-translocation (POST) complex to a pre-translocation (PRE) complex, thus giving elongation factor G a second chance to translocate the tRNAs correctly. Binds to ribosomes in a GTP-dependent manner. This chain is Elongation factor 4, found in Anaeromyxobacter dehalogenans (strain 2CP-1 / ATCC BAA-258).